A 151-amino-acid polypeptide reads, in one-letter code: SsrA-binding protein (151 aa).

Belongs to the SmpB family.

It localises to the cytoplasm. In terms of biological role, required for rescue of stalled ribosomes mediated by trans-translation. Binds to transfer-messenger RNA (tmRNA), required for stable association of tmRNA with ribosomes. tmRNA and SmpB together mimic tRNA shape, replacing the anticodon stem-loop with SmpB. tmRNA is encoded by the ssrA gene; the 2 termini fold to resemble tRNA(Ala) and it encodes a 'tag peptide', a short internal open reading frame. During trans-translation Ala-aminoacylated tmRNA acts like a tRNA, entering the A-site of stalled ribosomes, displacing the stalled mRNA. The ribosome then switches to translate the ORF on the tmRNA; the nascent peptide is terminated with the 'tag peptide' encoded by the tmRNA and targeted for degradation. The ribosome is freed to recommence translation, which seems to be the essential function of trans-translation. The chain is SsrA-binding protein from Lactobacillus acidophilus (strain ATCC 700396 / NCK56 / N2 / NCFM).